The sequence spans 465 residues: ATP-sulfurylase 3, chloroplastic (465 aa).

Residues 1 to 49 (MASMSTVFPKPTSFISQPLTKSHKSDSVTTSISFPSNSKTRSLRTISVR) constitute a chloroplast transit peptide.

It belongs to the sulfate adenylyltransferase family. In terms of assembly, homotetramer.

Its subcellular location is the plastid. It localises to the chloroplast stroma. The catalysed reaction is sulfate + ATP + H(+) = adenosine 5'-phosphosulfate + diphosphate. It participates in sulfur metabolism; hydrogen sulfide biosynthesis; sulfite from sulfate: step 1/3. The chain is ATP-sulfurylase 3, chloroplastic (APS3) from Arabidopsis thaliana (Mouse-ear cress).